A 356-amino-acid polypeptide reads, in one-letter code: Phospho-N-acetylmuramoyl-pentapeptide-transferase (356 aa).

10 consecutive transmembrane segments (helical) span residues 4-24 (ILLA…WFIH), 53-73 (GGAV…LVTW), 76-96 (PSIS…IGFL), 116-136 (LLGQ…FPDV), 152-172 (ISWL…LIAG), 186-206 (LATG…IWQF), 228-248 (DIAV…WWNA), 253-273 (IFLG…MAVV), 278-298 (LLLV…MLQV), and 333-353 (FWII…AEWV).

This sequence belongs to the glycosyltransferase 4 family. MraY subfamily. Mg(2+) serves as cofactor.

The protein resides in the cell membrane. It carries out the reaction UDP-N-acetyl-alpha-D-muramoyl-L-alanyl-gamma-D-glutamyl-meso-2,6-diaminopimeloyl-D-alanyl-D-alanine + di-trans,octa-cis-undecaprenyl phosphate = di-trans,octa-cis-undecaprenyl diphospho-N-acetyl-alpha-D-muramoyl-L-alanyl-D-glutamyl-meso-2,6-diaminopimeloyl-D-alanyl-D-alanine + UMP. It participates in cell wall biogenesis; peptidoglycan biosynthesis. Catalyzes the initial step of the lipid cycle reactions in the biosynthesis of the cell wall peptidoglycan: transfers peptidoglycan precursor phospho-MurNAc-pentapeptide from UDP-MurNAc-pentapeptide onto the lipid carrier undecaprenyl phosphate, yielding undecaprenyl-pyrophosphoryl-MurNAc-pentapeptide, known as lipid I. The sequence is that of Phospho-N-acetylmuramoyl-pentapeptide-transferase from Cutibacterium acnes (strain DSM 16379 / KPA171202) (Propionibacterium acnes).